A 266-amino-acid chain; its full sequence is 3-methyl-2-oxobutanoate hydroxymethyltransferase (266 aa).

Residues Asp45 and Asp84 each contribute to the Mg(2+) site. 3-methyl-2-oxobutanoate-binding positions include 45-46 (DS), Asp84, and Lys112. Residue Glu114 coordinates Mg(2+). Residue Glu181 is the Proton acceptor of the active site.

The protein belongs to the PanB family. As to quaternary structure, homodecamer; pentamer of dimers. Mg(2+) is required as a cofactor.

It is found in the cytoplasm. The enzyme catalyses 3-methyl-2-oxobutanoate + (6R)-5,10-methylene-5,6,7,8-tetrahydrofolate + H2O = 2-dehydropantoate + (6S)-5,6,7,8-tetrahydrofolate. It participates in cofactor biosynthesis; (R)-pantothenate biosynthesis; (R)-pantoate from 3-methyl-2-oxobutanoate: step 1/2. Functionally, catalyzes the reversible reaction in which hydroxymethyl group from 5,10-methylenetetrahydrofolate is transferred onto alpha-ketoisovalerate to form ketopantoate. This Pseudomonas putida (strain ATCC 700007 / DSM 6899 / JCM 31910 / BCRC 17059 / LMG 24140 / F1) protein is 3-methyl-2-oxobutanoate hydroxymethyltransferase.